A 422-amino-acid polypeptide reads, in one-letter code: AP-1 complex subunit mu-1-I (422 aa).

The MHD domain occupies 167–420; sequence KNEVFLDVIE…ITQNGEYEMR (254 aa).

Belongs to the adaptor complexes medium subunit family. As to quaternary structure, adaptor protein complex 1 (AP-1) is a heterotetramer composed of two large adaptins (gamma- and beta'-type subunits), a medium adaptin (mu-type subunit AP47) and a small adaptin (sigma-type subunit AP19). Interacts (via N-terminus) with kvs-4. As to expression, expressed in the cholinergic motor neuron DA9.

It is found in the golgi apparatus. The protein localises to the cytoplasmic vesicle. The protein resides in the clathrin-coated vesicle membrane. It localises to the cell projection. Its subcellular location is the dendrite. Component of the adaptor complexes which link clathrin to receptors in coated vesicles. Clathrin-associated protein complexes are believed to interact with the cytoplasmic tails of membrane proteins, leading to their selection and concentration. Required for many aspects of development and behavior, including negative regulation of vulval differentiation. Required for the dendritic localization of potassium channel kvs-4 in the cholinergic motor neuron DA9. This Caenorhabditis elegans protein is AP-1 complex subunit mu-1-I (unc-101).